A 138-amino-acid polypeptide reads, in one-letter code: Putative pre-16S rRNA nuclease (138 aa).

This sequence belongs to the YqgF nuclease family.

The protein localises to the cytoplasm. Its function is as follows. Could be a nuclease involved in processing of the 5'-end of pre-16S rRNA. The protein is Putative pre-16S rRNA nuclease of Caldicellulosiruptor bescii (strain ATCC BAA-1888 / DSM 6725 / KCTC 15123 / Z-1320) (Anaerocellum thermophilum).